A 314-amino-acid polypeptide reads, in one-letter code: N-alpha-acetyltransferase 80 (314 aa).

Positions 90–243 (LEPVHCRPEL…TTVLRAFSKP (154 aa)) constitute an N-acetyltransferase domain. Residues arginine 113 and 118-121 (RLHS) each bind substrate. Residues 169 to 171 (VVV), 177 to 182 (GRGFGR), and glutamine 207 each bind acetyl-CoA. The segment at 260–295 (VPRSSKGPPLPPPPPLPQSLTASPPPSPEPLPQSPL) is disordered. Residues 267-292 (PPLPPPPPLPQSLTASPPPSPEPLPQ) are compositionally biased toward pro residues.

It belongs to the acetyltransferase family.

It is found in the cytoplasm. It localises to the cytosol. The enzyme catalyses N-terminal L-aspartyl-L-aspartyl-L-aspartyl-[protein] + acetyl-CoA = N-terminal N-acetyl-L-aspartyl-L-aspartyl-L-aspartyl-[protein] + CoA + H(+). The catalysed reaction is N-terminal L-glutamyl-L-glutamyl-L-glutamyl-[protein] + acetyl-CoA = N-terminal N-acetyl-L-glutamyl-L-glutamyl-L-glutamyl-[protein] + CoA + H(+). N-alpha-acetyltransferase that specifically mediates the acetylation of the acidic amino terminus of processed forms of beta- and gamma-actin (ACTB and ACTG, respectively). N-terminal acetylation of processed beta- and gamma-actin regulates actin filament depolymerization and elongation. In vivo, preferentially displays N-terminal acetyltransferase activity towards acid N-terminal sequences starting with Asp-Asp-Asp and Glu-Glu-Glu. In vitro, shows high activity towards Met-Asp-Glu-Leu and Met-Asp-Asp-Asp. May act as a tumor suppressor. This chain is N-alpha-acetyltransferase 80, found in Mus musculus (Mouse).